A 392-amino-acid polypeptide reads, in one-letter code: Cell division protein FtsZ (392 aa).

Residues 24 to 28 (GGGCN), 111 to 113 (GTG), Glu-142, Arg-145, and Asp-189 contribute to the GTP site.

Belongs to the FtsZ family. In terms of assembly, homodimer. Polymerizes to form a dynamic ring structure in a strictly GTP-dependent manner. Interacts directly with several other division proteins.

It localises to the cytoplasm. In terms of biological role, essential cell division protein that forms a contractile ring structure (Z ring) at the future cell division site. The regulation of the ring assembly controls the timing and the location of cell division. One of the functions of the FtsZ ring is to recruit other cell division proteins to the septum to produce a new cell wall between the dividing cells. Binds GTP and shows GTPase activity. The chain is Cell division protein FtsZ from Neisseria gonorrhoeae.